Reading from the N-terminus, the 173-residue chain is NADH-ubiquinone oxidoreductase chain 6 (173 aa).

5 helical membrane-spanning segments follow: residues 1–21, 24–44, 53–73, 87–107, and 141–161; these read MTYLVSLFLLGLVLGLVAVAS, APYFAALGLVVAAGVGCGVLV, LVLFLIYLGGMLVVFAYSAAL, VLGYVVVYTVGVVLVAGLFWG, and GGMLIACAWVLLLTLFVVLEL.

Belongs to the complex I subunit 6 family.

Its subcellular location is the mitochondrion membrane. It carries out the reaction a ubiquinone + NADH + 5 H(+)(in) = a ubiquinol + NAD(+) + 4 H(+)(out). Core subunit of the mitochondrial membrane respiratory chain NADH dehydrogenase (Complex I) that is believed to belong to the minimal assembly required for catalysis. Complex I functions in the transfer of electrons from NADH to the respiratory chain. The immediate electron acceptor for the enzyme is believed to be ubiquinone. This chain is NADH-ubiquinone oxidoreductase chain 6 (MT-ND6), found in Oncorhynchus mykiss (Rainbow trout).